Reading from the N-terminus, the 160-residue chain is Large ribosomal subunit protein bL9 (160 aa).

It belongs to the bacterial ribosomal protein bL9 family.

In terms of biological role, binds to the 23S rRNA. In Neorickettsia sennetsu (strain ATCC VR-367 / Miyayama) (Ehrlichia sennetsu), this protein is Large ribosomal subunit protein bL9.